The following is a 163-amino-acid chain: Putative H/ACA ribonucleoprotein complex subunit 2-like protein (163 aa).

A disordered region spans residues M1–T27.

Belongs to the eukaryotic ribosomal protein eL8 family. In terms of assembly, component of the small nucleolar ribonucleoprotein particle containing H/ACA-type snoRNAs (H/ACA snoRNPs).

It localises to the nucleus. The protein localises to the nucleolus. Required for ribosome biogenesis. Part of a complex which catalyzes pseudouridylation of rRNA. This involves the isomerization of uridine such that the ribose is subsequently attached to C5, instead of the normal N1. Pseudouridine ('psi') residues may serve to stabilize the conformation of rRNAs. This is Putative H/ACA ribonucleoprotein complex subunit 2-like protein from Caenorhabditis elegans.